The sequence spans 117 residues: G antigen 12J (117 aa).

Residues methionine 1 to cysteine 117 form a disordered region. Acidic residues-rich tracts occupy residues phenylalanine 32–glutamate 45 and glutamate 87–glutamate 96. Positions glutamate 103–cysteine 117 are enriched in basic and acidic residues.

This sequence belongs to the GAGE family.

This Homo sapiens (Human) protein is G antigen 12J (GAGE12J).